A 679-amino-acid chain; its full sequence is UvrABC system protein B (679 aa).

Residues 25-190 (EGVNQGQRYQ…SRNDFDITRG (166 aa)) enclose the Helicase ATP-binding domain. Residue 38–45 (GATGTGKT) participates in ATP binding. Residues 91-114 (YYDYYQPEAYVPVSDTYIAKTASI) carry the Beta-hairpin motif. A Helicase C-terminal domain is found at 429-591 (QVDDLLAEIR…IVPRPAGKRA (163 aa)). Residues 639–674 (PELIDQLETKMKEAAKNLNFEEAASLRDRIKKFRQK) enclose the UVR domain.

Belongs to the UvrB family. In terms of assembly, forms a heterotetramer with UvrA during the search for lesions. Interacts with UvrC in an incision complex.

It localises to the cytoplasm. Functionally, the UvrABC repair system catalyzes the recognition and processing of DNA lesions. A damage recognition complex composed of 2 UvrA and 2 UvrB subunits scans DNA for abnormalities. Upon binding of the UvrA(2)B(2) complex to a putative damaged site, the DNA wraps around one UvrB monomer. DNA wrap is dependent on ATP binding by UvrB and probably causes local melting of the DNA helix, facilitating insertion of UvrB beta-hairpin between the DNA strands. Then UvrB probes one DNA strand for the presence of a lesion. If a lesion is found the UvrA subunits dissociate and the UvrB-DNA preincision complex is formed. This complex is subsequently bound by UvrC and the second UvrB is released. If no lesion is found, the DNA wraps around the other UvrB subunit that will check the other stand for damage. The chain is UvrABC system protein B from Prochlorococcus marinus (strain MIT 9303).